The primary structure comprises 544 residues: 4-coumarate:CoA ligase 1 (544 aa).

It belongs to the ATP-dependent AMP-binding enzyme family. Monomer. As to expression, mostly expressed in flower organs, with highest levels in corollas, and, to a lesser extent, in tubes, sepals, pistils, stamen and ovaries. Also present at low levels in leaves.

It is found in the cytoplasm. It localises to the cytosol. It catalyses the reaction (E)-4-coumarate + ATP + CoA = (E)-4-coumaroyl-CoA + AMP + diphosphate. The catalysed reaction is (E)-caffeate + ATP + CoA = (E)-caffeoyl-CoA + AMP + diphosphate. The enzyme catalyses benzoate + ATP + CoA = benzoyl-CoA + AMP + diphosphate. It carries out the reaction (E)-cinnamate + ATP + CoA = (E)-cinnamoyl-CoA + AMP + diphosphate. It catalyses the reaction (E)-ferulate + ATP + CoA = (E)-feruloyl-CoA + AMP + diphosphate. It participates in phenylpropanoid metabolism; trans-cinnamate biosynthesis. The protein operates within phytoalexin biosynthesis; 3,4',5-trihydroxystilbene biosynthesis; 3,4',5-trihydroxystilbene from trans-4-coumarate: step 1/2. In terms of biological role, catalyzes the formation of CoA esters of trans-cinnamic acid, 4-coumaric acid, ferulic acid, benzoic acid and caffeic acid. The protein is 4-coumarate:CoA ligase 1 of Petunia hybrida (Petunia).